Here is a 184-residue protein sequence, read N- to C-terminus: MVRKLKFHEQKLLKQVDFLNWEVTDHNLHELRVLRRYRLQRREDYTRYNQLSRAVRELARRLRDLPERDQFRVRASAALLDKLYALGLVPTRGSLELCDFVTASSFCRRRLPTVLLKLRMAQHLQAAVAFVEQGHVRVGPDVVTDPAFLVTRSMEDFVTWVDSSKIKRHVLEYNEERDDFDLEA.

Residues Arg109–Glu175 enclose the S4 RNA-binding domain.

Belongs to the universal ribosomal protein uS4 family. In terms of assembly, part of the small subunit (SSU) processome, composed of more than 70 proteins and the RNA chaperone small nucleolar RNA (snoRNA) U3. Component of a heterotrimeric complex containing IMP3, IMP4 and MPHOSPH10. Interacts with MPHOSPH10.

The protein localises to the nucleus. It is found in the nucleolus. Its function is as follows. Component of the 60-80S U3 small nucleolar ribonucleoprotein (U3 snoRNP). Required for the early cleavages during pre-18S ribosomal RNA processing. Part of the small subunit (SSU) processome, first precursor of the small eukaryotic ribosomal subunit. During the assembly of the SSU processome in the nucleolus, many ribosome biogenesis factors, an RNA chaperone and ribosomal proteins associate with the nascent pre-rRNA and work in concert to generate RNA folding, modifications, rearrangements and cleavage as well as targeted degradation of pre-ribosomal RNA by the RNA exosome. This is U3 small nucleolar ribonucleoprotein protein IMP3 from Homo sapiens (Human).